We begin with the raw amino-acid sequence, 435 residues long: 3-phosphoshikimate 1-carboxyvinyltransferase (435 aa).

3-phosphoshikimate contacts are provided by lysine 23, serine 24, and arginine 28. Lysine 23 lines the phosphoenolpyruvate pocket. Glycine 96 and arginine 124 together coordinate phosphoenolpyruvate. 3-phosphoshikimate is bound by residues serine 167, serine 168, glutamine 169, serine 196, glutamate 311, and histidine 340. Residue glutamine 169 participates in phosphoenolpyruvate binding. The active-site Proton acceptor is the glutamate 311. 3 residues coordinate phosphoenolpyruvate: arginine 344, arginine 385, and lysine 410.

Belongs to the EPSP synthase family. As to quaternary structure, monomer.

It is found in the cytoplasm. The catalysed reaction is 3-phosphoshikimate + phosphoenolpyruvate = 5-O-(1-carboxyvinyl)-3-phosphoshikimate + phosphate. Its pathway is metabolic intermediate biosynthesis; chorismate biosynthesis; chorismate from D-erythrose 4-phosphate and phosphoenolpyruvate: step 6/7. Its function is as follows. Catalyzes the transfer of the enolpyruvyl moiety of phosphoenolpyruvate (PEP) to the 5-hydroxyl of shikimate-3-phosphate (S3P) to produce enolpyruvyl shikimate-3-phosphate and inorganic phosphate. This is 3-phosphoshikimate 1-carboxyvinyltransferase from Mycolicibacterium paratuberculosis (strain ATCC BAA-968 / K-10) (Mycobacterium paratuberculosis).